A 123-amino-acid chain; its full sequence is Large ribosomal subunit protein uL14 (123 aa).

The protein belongs to the universal ribosomal protein uL14 family. As to quaternary structure, part of the 50S ribosomal subunit. Forms a cluster with proteins L3 and L19. In the 70S ribosome, L14 and L19 interact and together make contacts with the 16S rRNA in bridges B5 and B8.

Binds to 23S rRNA. Forms part of two intersubunit bridges in the 70S ribosome. In Escherichia coli O6:K15:H31 (strain 536 / UPEC), this protein is Large ribosomal subunit protein uL14.